The sequence spans 604 residues: MDFDEVLREVGSFGLYQKVIICSVLLPAALPCAFHAYSQLFIAATPQHFCRVPELEPWTQDYVQLVKNLSIPRNRNGAYAECSMYSRNYTDIVRYLEYRPPPDLLRQQAEDLLKLQPDTTQVVPCQHGWHYDKSIYSSTVVQEWNLVCDRSFLVTLALVVFGVGGLLGNYVFGYLVDLWGRRPSFYAYLLLEIIACAASAFAWNYYTWLGLRFVVGLTVPAILASPYVLAIELVGPERRVFCTIVSNIAYSLGLVVLAGVIYIVRDWRELSLAVSMPLLMLFSCFFVLPESPRWLMAVGKTRRAIKILKVMARVNGVRVNRDFVERLQRKLVITRAAETKSSMTTHYGILDLFRGPNMRRKTLIITLIWFANTSVYVGLSYYAPALGGDEIWNFFLAGAVELPTYLLLWPGLSYFGRRWILFISMLVGGVACVATFLYPDITLLLYCVGKMGISSSFVVLPLMASELYPTVVRGLGMSFSSVISMVGPIVIPMINHMGQQMLVLPLIVMGALLILGGFASLLLPETRNRNLPQTLEEGEAVPLSFLLCCCVESERKPNNIRASPKKRILPEAGTPVFHRVDTPVSDRVPCKIVCSICKNEMRTL.

Residues 1–23 are Cytoplasmic-facing; the sequence is MDFDEVLREVGSFGLYQKVIICS. A helical transmembrane segment spans residues 24–44; that stretch reads VLLPAALPCAFHAYSQLFIAA. Residues 45–151 lie on the Extracellular side of the membrane; the sequence is TPQHFCRVPE…QEWNLVCDRS (107 aa). Residues Asn68 and Asn88 are each glycosylated (N-linked (GlcNAc...) asparagine). Residues 152-172 form a helical membrane-spanning segment; sequence FLVTLALVVFGVGGLLGNYVF. The Cytoplasmic segment spans residues 173 to 182; it reads GYLVDLWGRR. The helical transmembrane segment at 183 to 203 threads the bilayer; that stretch reads PSFYAYLLLEIIACAASAFAW. Topologically, residues 204–212 are extracellular; the sequence is NYYTWLGLR. Residues 213–233 form a helical membrane-spanning segment; it reads FVVGLTVPAILASPYVLAIEL. Topologically, residues 234–243 are cytoplasmic; the sequence is VGPERRVFCT. A helical membrane pass occupies residues 244 to 264; it reads IVSNIAYSLGLVVLAGVIYIV. Residues 265–268 lie on the Extracellular side of the membrane; it reads RDWR. Residues 269-289 form a helical membrane-spanning segment; that stretch reads ELSLAVSMPLLMLFSCFFVLP. The Cytoplasmic portion of the chain corresponds to 290–362; sequence ESPRWLMAVG…FRGPNMRRKT (73 aa). The chain crosses the membrane as a helical span at residues 363 to 383; it reads LIITLIWFANTSVYVGLSYYA. Residues 384-390 are Extracellular-facing; that stretch reads PALGGDE. Residues 391–411 form a helical membrane-spanning segment; that stretch reads IWNFFLAGAVELPTYLLLWPG. At 412-418 the chain is on the cytoplasmic side; it reads LSYFGRR. A helical membrane pass occupies residues 419–439; the sequence is WILFISMLVGGVACVATFLYP. Residues 440-442 are Extracellular-facing; it reads DIT. Residues 443-463 traverse the membrane as a helical segment; that stretch reads LLLYCVGKMGISSSFVVLPLM. The Cytoplasmic segment spans residues 464–473; that stretch reads ASELYPTVVR. The chain crosses the membrane as a helical span at residues 474-494; that stretch reads GLGMSFSSVISMVGPIVIPMI. At 495 to 501 the chain is on the extracellular side; the sequence is NHMGQQM. The chain crosses the membrane as a helical span at residues 502 to 522; the sequence is LVLPLIVMGALLILGGFASLL. Residues 523–604 are Cytoplasmic-facing; sequence LPETRNRNLP…SICKNEMRTL (82 aa).

It belongs to the major facilitator (TC 2.A.1) superfamily. Organic cation transporter (TC 2.A.1.19) family. In terms of tissue distribution, expressed in the head and predominantly in the retinal pigment cells of the compound eye.

It localises to the cell membrane. Its function is as follows. Beta-alanine transporter required for the uptake of beta-alanine by the glia. Required for the recycling process of the neurotransmitter histamine in photoreceptor neurons of the compound eye and therefore for photoreceptor synaptic transmission. Following histamine release from photoreceptors and its uptake by glia, histamine is conjugated to beta-alanine by e/Ebony to form the inactive metabolite, carcinine. The polypeptide is Beta-alanine transporter (Drosophila melanogaster (Fruit fly)).